The chain runs to 301 residues: ATP synthase subunit gamma, mitochondrial (301 aa).

This sequence belongs to the ATPase gamma chain family. F-type ATPases have 2 components, CF(1) - the catalytic core - and CF(0) - the membrane proton channel. CF(1) has five subunits: alpha(3), beta(3), gamma(1), delta(1), epsilon(1). CF(0) has three main subunits: a, b and c.

The protein localises to the mitochondrion. It localises to the mitochondrion inner membrane. Functionally, mitochondrial membrane ATP synthase (F(1)F(0) ATP synthase or Complex V) produces ATP from ADP in the presence of a proton gradient across the membrane which is generated by electron transport complexes of the respiratory chain. F-type ATPases consist of two structural domains, F(1) - containing the extramembraneous catalytic core, and F(0) - containing the membrane proton channel, linked together by a central stalk and a peripheral stalk. During catalysis, ATP synthesis in the catalytic domain of F(1) is coupled via a rotary mechanism of the central stalk subunits to proton translocation. Part of the complex F(1) domain and the central stalk which is part of the complex rotary element. The gamma subunit protrudes into the catalytic domain formed of alpha(3)beta(3). Rotation of the central stalk against the surrounding alpha(3)beta(3) subunits leads to hydrolysis of ATP in three separate catalytic sites on the beta subunits. The sequence is that of ATP synthase subunit gamma, mitochondrial (atp3) from Schizosaccharomyces pombe (strain 972 / ATCC 24843) (Fission yeast).